Here is a 209-residue protein sequence, read N- to C-terminus: Uracil phosphoribosyltransferase (209 aa).

5-phospho-alpha-D-ribose 1-diphosphate-binding positions include Arg-79, Arg-104, and 131–139 (DPMLATGGS). Uracil contacts are provided by residues Ile-194 and 199–201 (GDA). Asp-200 is a binding site for 5-phospho-alpha-D-ribose 1-diphosphate.

It belongs to the UPRTase family. Mg(2+) is required as a cofactor.

It carries out the reaction UMP + diphosphate = 5-phospho-alpha-D-ribose 1-diphosphate + uracil. It functions in the pathway pyrimidine metabolism; UMP biosynthesis via salvage pathway; UMP from uracil: step 1/1. Allosterically activated by GTP. Its function is as follows. Catalyzes the conversion of uracil and 5-phospho-alpha-D-ribose 1-diphosphate (PRPP) to UMP and diphosphate. The polypeptide is Uracil phosphoribosyltransferase (Natranaerobius thermophilus (strain ATCC BAA-1301 / DSM 18059 / JW/NM-WN-LF)).